The following is a 282-amino-acid chain: Lipoyl synthase (282 aa).

[4Fe-4S] cluster is bound by residues Cys37, Cys42, Cys48, Cys63, Cys67, Cys70, and Ser275. A Radical SAM core domain is found at 49 to 264 (WSRGTATFMI…RLVGIEKGFR (216 aa)).

It belongs to the radical SAM superfamily. Lipoyl synthase family. It depends on [4Fe-4S] cluster as a cofactor.

It localises to the cytoplasm. The catalysed reaction is [[Fe-S] cluster scaffold protein carrying a second [4Fe-4S](2+) cluster] + N(6)-octanoyl-L-lysyl-[protein] + 2 oxidized [2Fe-2S]-[ferredoxin] + 2 S-adenosyl-L-methionine + 4 H(+) = [[Fe-S] cluster scaffold protein] + N(6)-[(R)-dihydrolipoyl]-L-lysyl-[protein] + 4 Fe(3+) + 2 hydrogen sulfide + 2 5'-deoxyadenosine + 2 L-methionine + 2 reduced [2Fe-2S]-[ferredoxin]. The protein operates within protein modification; protein lipoylation via endogenous pathway; protein N(6)-(lipoyl)lysine from octanoyl-[acyl-carrier-protein]: step 2/2. In terms of biological role, catalyzes the radical-mediated insertion of two sulfur atoms into the C-6 and C-8 positions of the octanoyl moiety bound to the lipoyl domains of lipoate-dependent enzymes, thereby converting the octanoylated domains into lipoylated derivatives. The protein is Lipoyl synthase of Porphyromonas gingivalis (strain ATCC BAA-308 / W83).